Here is a 186-residue protein sequence, read N- to C-terminus: Large ribosomal subunit protein uL15 (186 aa).

Residues 1-48 (MDLSSLRPAKGAVKARKRVGRGPGSGNGTTAGKGNKGQQSRSGYQRPV) form a disordered region. Positions 21–35 (RGPGSGNGTTAGKGN) are enriched in gly residues.

The protein belongs to the universal ribosomal protein uL15 family. Part of the 50S ribosomal subunit.

Binds to the 23S rRNA. This Chlorobaculum tepidum (strain ATCC 49652 / DSM 12025 / NBRC 103806 / TLS) (Chlorobium tepidum) protein is Large ribosomal subunit protein uL15.